The primary structure comprises 86 residues: Photosystem I reaction center subunit PsaK 1 (86 aa).

Residues 1–8 constitute a propeptide that is removed on maturation; sequence MLTSTLLA. Transmembrane regions (helical) follow at residues 14–34 and 60–80; these read LEWS…AITF and PALL…VLGL.

It belongs to the PsaG/PsaK family. In terms of assembly, the cyanobacterial PSI reaction center is composed of one copy each of PsaA,B,C,D,E,F,I,J,K,L,M and X, and forms dimeric and tetrameric complexes.

Its subcellular location is the cellular thylakoid membrane. The protein is Photosystem I reaction center subunit PsaK 1 (psaK1) of Nostoc sp. (strain PCC 7120 / SAG 25.82 / UTEX 2576).